We begin with the raw amino-acid sequence, 445 residues long: UDP-N-acetylmuramoylalanine--D-glutamate ligase (445 aa).

117–123 (GSNGKTT) lines the ATP pocket.

It belongs to the MurCDEF family.

Its subcellular location is the cytoplasm. The catalysed reaction is UDP-N-acetyl-alpha-D-muramoyl-L-alanine + D-glutamate + ATP = UDP-N-acetyl-alpha-D-muramoyl-L-alanyl-D-glutamate + ADP + phosphate + H(+). It participates in cell wall biogenesis; peptidoglycan biosynthesis. Cell wall formation. Catalyzes the addition of glutamate to the nucleotide precursor UDP-N-acetylmuramoyl-L-alanine (UMA). The protein is UDP-N-acetylmuramoylalanine--D-glutamate ligase of Neisseria meningitidis serogroup C (strain 053442).